Consider the following 180-residue polypeptide: DNA-directed RNA polymerase subunit Rpo7 (180 aa).

An S1 motif domain is found at 82 to 165; that stretch reads QEVVEGEVLQ…RLPRIALTMR (84 aa).

It belongs to the eukaryotic RPB7/RPC8 RNA polymerase subunit family. As to quaternary structure, part of the 13-subunit RNA polymerase complex. Forms a stalk with Rpo4 that extends from the main structure.

The protein localises to the cytoplasm. The enzyme catalyses RNA(n) + a ribonucleoside 5'-triphosphate = RNA(n+1) + diphosphate. DNA-dependent RNA polymerase (RNAP) catalyzes the transcription of DNA into RNA using the four ribonucleoside triphosphates as substrates. The protein is DNA-directed RNA polymerase subunit Rpo7 of Saccharolobus solfataricus (strain ATCC 35092 / DSM 1617 / JCM 11322 / P2) (Sulfolobus solfataricus).